Consider the following 460-residue polypeptide: Cysteine--tRNA ligase (460 aa).

Cys-28 is a Zn(2+) binding site. Positions 30-40 (MTVYDYCHLGH) match the 'HIGH' region motif. Cys-209, His-234, and Glu-238 together coordinate Zn(2+). A 'KMSKS' region motif is present at residues 266-270 (KMSKS). Residue Lys-269 participates in ATP binding.

It belongs to the class-I aminoacyl-tRNA synthetase family. Monomer. Zn(2+) serves as cofactor.

The protein localises to the cytoplasm. The catalysed reaction is tRNA(Cys) + L-cysteine + ATP = L-cysteinyl-tRNA(Cys) + AMP + diphosphate. This chain is Cysteine--tRNA ligase, found in Pseudomonas putida (strain GB-1).